A 133-amino-acid polypeptide reads, in one-letter code: Probable non-specific lipid-transfer protein 2 (133 aa).

The signal sequence occupies residues 1–31 (MRTVSMAALVVIAAALAWTSSAELASAPAPG). Intrachain disulfides connect cysteine 35–cysteine 83, cysteine 45–cysteine 60, cysteine 61–cysteine 106, and cysteine 81–cysteine 121.

It belongs to the plant LTP family.

Its function is as follows. Plant non-specific lipid-transfer proteins transfer phospholipids as well as galactolipids across membranes. May play a role in wax or cutin deposition in the cell walls of expanding epidermal cells and certain secretory tissues. The polypeptide is Probable non-specific lipid-transfer protein 2 (Parietaria judaica (Pellitory-of-the-wall)).